A 433-amino-acid chain; its full sequence is UDP-N-acetylglucosamine 1-carboxyvinyltransferase 1 (433 aa).

Phosphoenolpyruvate is bound at residue 22-23 (KN). R95 is a UDP-N-acetyl-alpha-D-glucosamine binding site. Residue C119 is the Proton donor of the active site. C119 bears the 2-(S-cysteinyl)pyruvic acid O-phosphothioketal mark. UDP-N-acetyl-alpha-D-glucosamine contacts are provided by residues 124–128 (RPVDL), D307, and V329.

Belongs to the EPSP synthase family. MurA subfamily.

It localises to the cytoplasm. The enzyme catalyses phosphoenolpyruvate + UDP-N-acetyl-alpha-D-glucosamine = UDP-N-acetyl-3-O-(1-carboxyvinyl)-alpha-D-glucosamine + phosphate. It participates in cell wall biogenesis; peptidoglycan biosynthesis. In terms of biological role, cell wall formation. Adds enolpyruvyl to UDP-N-acetylglucosamine. This is UDP-N-acetylglucosamine 1-carboxyvinyltransferase 1 from Latilactobacillus sakei subsp. sakei (strain 23K) (Lactobacillus sakei subsp. sakei).